The following is a 241-amino-acid chain: Small ribosomal subunit protein uS3 (241 aa).

The KH type-2 domain maps to 39 to 107; that stretch reads IREVLMKNLK…EVVINIVEVR (69 aa). The segment at 219–241 is disordered; sequence MAELDHAGGGGGGERRRRERDAA. Residues 231–241 show a composition bias toward basic and acidic residues; the sequence is GERRRRERDAA.

Belongs to the universal ribosomal protein uS3 family. As to quaternary structure, part of the 30S ribosomal subunit. Forms a tight complex with proteins S10 and S14.

In terms of biological role, binds the lower part of the 30S subunit head. Binds mRNA in the 70S ribosome, positioning it for translation. The chain is Small ribosomal subunit protein uS3 from Beijerinckia indica subsp. indica (strain ATCC 9039 / DSM 1715 / NCIMB 8712).